The primary structure comprises 186 residues: Peptidyl-tRNA hydrolase (186 aa).

A tRNA-binding site is contributed by Y14. The active-site Proton acceptor is H19. The tRNA site is built by Y64, N66, and N112.

It belongs to the PTH family. In terms of assembly, monomer.

The protein localises to the cytoplasm. The catalysed reaction is an N-acyl-L-alpha-aminoacyl-tRNA + H2O = an N-acyl-L-amino acid + a tRNA + H(+). In terms of biological role, hydrolyzes ribosome-free peptidyl-tRNAs (with 1 or more amino acids incorporated), which drop off the ribosome during protein synthesis, or as a result of ribosome stalling. Its function is as follows. Catalyzes the release of premature peptidyl moieties from peptidyl-tRNA molecules trapped in stalled 50S ribosomal subunits, and thus maintains levels of free tRNAs and 50S ribosomes. The chain is Peptidyl-tRNA hydrolase from Geobacillus kaustophilus (strain HTA426).